The chain runs to 227 residues: (S)-2-haloacid dehalogenase (227 aa).

The Nucleophile role is filled by D10. Residues 11–12, R41, and 118–119 each bind an (S)-2-haloacid; these read LY and SN. The important for catalytic activity stretch occupies residues 175–180; it reads SSNAWD.

Belongs to the HAD-like hydrolase superfamily. S-2-haloalkanoic acid dehalogenase family.

It carries out the reaction an (S)-2-haloacid + H2O = a (2R)-2-hydroxycarboxylate + a halide anion + H(+). The enzyme catalyses (S)-2-chloropropanoate + H2O = (R)-lactate + chloride + H(+). In terms of biological role, catalyzes the hydrolytic dehalogenation of small (S)-2-haloalkanoic acids to yield the corresponding (R)-2-hydroxyalkanoic acids. Acts on acids of short chain lengths, C(2) to C(4), with inversion of configuration at C-2. Active with 2-halogenated carboxylic acids and converts only the S-isomer (or L-isomer) of 2-chloropropionic acid with inversion of configuration to produce R-lactate (or D-isomer). This is (S)-2-haloacid dehalogenase (dhl VII) from Pseudomonas fluorescens.